Consider the following 417-residue polypeptide: Pigment epithelium-derived factor (417 aa).

The signal sequence occupies residues 1 to 19 (MQALVLLLWTGALLGHGSS). Residues 17–41 (GSSQNVPSSSEGSPVPDSTGEPVEE) form a disordered region. The span at 18–28 (SSQNVPSSSEG) shows a compositional bias: polar residues. Pyrrolidone carboxylic acid is present on glutamine 20. A Phosphoserine modification is found at serine 24. Asparagine 284 carries N-linked (GlcNAc...) asparagine glycosylation.

The protein belongs to the serpin family. As to quaternary structure, interacts with PNPLA2; this interaction stimulates the phospholipase A2 activity of PNPLA2. As to expression, highly expressed in the liver, gastric glandular mucosa and renal tubules. It is also expressed in the brain, heart, lung retina and testes.

The protein localises to the secreted. The protein resides in the melanosome. Neurotrophic protein; induces extensive neuronal differentiation in retinoblastoma cells. Potent inhibitor of angiogenesis. As it does not undergo the S (stressed) to R (relaxed) conformational transition characteristic of active serpins, it exhibits no serine protease inhibitory activity. The protein is Pigment epithelium-derived factor (Serpinf1) of Mus musculus (Mouse).